The primary structure comprises 265 residues: Shikimate dehydrogenase (NADP(+)) (265 aa).

Shikimate contacts are provided by residues 15–17 and Thr-62; that span reads SLS. Residue Lys-66 is the Proton acceptor of the active site. Glu-78 serves as a coordination point for NADP(+). Shikimate-binding residues include Asn-87 and Asp-102. NADP(+) contacts are provided by residues 126–130, 150–155, and Val-210; these read GAGGV and NRTELK. Residue Tyr-212 coordinates shikimate. NADP(+) is bound at residue Gly-233.

The protein belongs to the shikimate dehydrogenase family. In terms of assembly, homodimer.

It carries out the reaction shikimate + NADP(+) = 3-dehydroshikimate + NADPH + H(+). Its pathway is metabolic intermediate biosynthesis; chorismate biosynthesis; chorismate from D-erythrose 4-phosphate and phosphoenolpyruvate: step 4/7. In terms of biological role, involved in the biosynthesis of the chorismate, which leads to the biosynthesis of aromatic amino acids. Catalyzes the reversible NADPH linked reduction of 3-dehydroshikimate (DHSA) to yield shikimate (SA). This is Shikimate dehydrogenase (NADP(+)) from Pelagibacter ubique (strain HTCC1062).